Reading from the N-terminus, the 148-residue chain is 3-hydroxyacyl-[acyl-carrier-protein] dehydratase FabZ (148 aa).

His55 is an active-site residue.

The protein belongs to the thioester dehydratase family. FabZ subfamily.

It localises to the cytoplasm. The catalysed reaction is a (3R)-hydroxyacyl-[ACP] = a (2E)-enoyl-[ACP] + H2O. Functionally, involved in unsaturated fatty acids biosynthesis. Catalyzes the dehydration of short chain beta-hydroxyacyl-ACPs and long chain saturated and unsaturated beta-hydroxyacyl-ACPs. The sequence is that of 3-hydroxyacyl-[acyl-carrier-protein] dehydratase FabZ from Haemophilus influenzae (strain 86-028NP).